A 580-amino-acid chain; its full sequence is Arginine--tRNA ligase (580 aa).

The 'HIGH' region signature appears at 123–133 (PNLAKEMHVGH).

This sequence belongs to the class-I aminoacyl-tRNA synthetase family. As to quaternary structure, monomer.

It localises to the cytoplasm. It catalyses the reaction tRNA(Arg) + L-arginine + ATP = L-arginyl-tRNA(Arg) + AMP + diphosphate. The polypeptide is Arginine--tRNA ligase (Pseudoalteromonas translucida (strain TAC 125)).